A 315-amino-acid polypeptide reads, in one-letter code: Mitochondrial outer membrane import complex protein METAXIN (315 aa).

The residue at position 1 (Met1) is an N-acetylmethionine. Residues 157–181 (ENAEQREKQIYKRASEAYEALSTRL) are a coiled coil. The chain crosses the membrane as a helical span at residues 195 to 215 (LDAFLLSHILFIIQALPVTSV). The tract at residues 240-277 (ASSSSPSPPLHSFPSSFPRKSSKPKSKPKVEKTEEEKK) is disordered. Positions 267-277 (PKVEKTEEEKK) are enriched in basic and acidic residues. The chain crosses the membrane as a helical span at residues 284 to 304 (FFLAAQFLAVVIYVSVMGGGS).

The protein belongs to the metaxin family. In terms of assembly, part of a high molecular weight complex that is distinct from the TOM complex. Interacts with a variety of mitochondrial precursor proteins. Expressed in roots, young cotyledons, flowers and leaves.

It is found in the mitochondrion inner membrane. The protein resides in the mitochondrion outer membrane. Its function is as follows. Involved in transport of proteins into the mitochondrion. The chain is Mitochondrial outer membrane import complex protein METAXIN (MTX1) from Arabidopsis thaliana (Mouse-ear cress).